A 349-amino-acid polypeptide reads, in one-letter code: uncharacterized protein (349 aa).

A helical transmembrane segment spans residues 221 to 241 (AFVVWIGSGLNIIWWTGIVLL). Residues 328-339 (VASAPPAVPSQP) are compositionally biased toward pro residues. Residues 328-349 (VASAPPAVPSQPPEYSSVFPPV) are disordered.

The protein localises to the host membrane. This is an uncharacterized protein from Human cytomegalovirus (strain Merlin) (HHV-5).